A 387-amino-acid polypeptide reads, in one-letter code: MDLYEYQARDLFEKYGVPVLPGIVADTPEEVRAAAEKLGGVNVVKAQVKTGGRGKVGGVKVAKNPDEAEEAAKAILGLDIKGHVVRRVMVSGGARIAREFYFSVLLDRANRSYLSLTSVEGGMEIEQLAVEKPEALARIGVDPIAGVDTTKATEIARAAGFPEELVSKVADVFVKLYDVYKGEDATLVEVNPLVLTEEGEVIALDGKVTLDENAGFRHPEHEELEDKAAADPLEAKAKEADLNYVKLDGQVGIIGNGAGLVMSTLDVVAYAGERHKGVKPANFLDIGGGASAEVMAAGLDVILNDPQVKSVFVNVFGGITACDAVANGIVKALEILGGDANKPLVVRLDGNNVEEGRRILTDANHPLVTLALTMDEGADKAAELAAK.

The region spanning 9-236 (RDLFEKYGVP…KAAADPLEAK (228 aa)) is the ATP-grasp domain. ATP is bound by residues lysine 45, 52–54 (GRG), alanine 94, and glutamate 99. Asparagine 191 and aspartate 205 together coordinate Mg(2+). Substrate is bound by residues asparagine 256 and 318–320 (GIT).

The protein belongs to the succinate/malate CoA ligase beta subunit family. In terms of assembly, heterotetramer of two alpha and two beta subunits. It depends on Mg(2+) as a cofactor.

The catalysed reaction is succinate + ATP + CoA = succinyl-CoA + ADP + phosphate. It catalyses the reaction GTP + succinate + CoA = succinyl-CoA + GDP + phosphate. It participates in carbohydrate metabolism; tricarboxylic acid cycle; succinate from succinyl-CoA (ligase route): step 1/1. Succinyl-CoA synthetase functions in the citric acid cycle (TCA), coupling the hydrolysis of succinyl-CoA to the synthesis of either ATP or GTP and thus represents the only step of substrate-level phosphorylation in the TCA. The beta subunit provides nucleotide specificity of the enzyme and binds the substrate succinate, while the binding sites for coenzyme A and phosphate are found in the alpha subunit. The protein is Succinate--CoA ligase [ADP-forming] subunit beta of Leifsonia xyli subsp. xyli (strain CTCB07).